A 209-amino-acid polypeptide reads, in one-letter code: ATP-dependent Clp protease proteolytic subunit 2 (209 aa).

Ser106 functions as the Nucleophile in the catalytic mechanism. Residue His131 is part of the active site.

Belongs to the peptidase S14 family. In terms of assembly, fourteen ClpP subunits assemble into 2 heptameric rings which stack back to back to give a disk-like structure with a central cavity, resembling the structure of eukaryotic proteasomes.

The protein localises to the cytoplasm. The catalysed reaction is Hydrolysis of proteins to small peptides in the presence of ATP and magnesium. alpha-casein is the usual test substrate. In the absence of ATP, only oligopeptides shorter than five residues are hydrolyzed (such as succinyl-Leu-Tyr-|-NHMec, and Leu-Tyr-Leu-|-Tyr-Trp, in which cleavage of the -Tyr-|-Leu- and -Tyr-|-Trp bonds also occurs).. Its function is as follows. Cleaves peptides in various proteins in a process that requires ATP hydrolysis. Has a chymotrypsin-like activity. Plays a major role in the degradation of misfolded proteins. This chain is ATP-dependent Clp protease proteolytic subunit 2, found in Rhizobium etli (strain ATCC 51251 / DSM 11541 / JCM 21823 / NBRC 15573 / CFN 42).